A 1529-amino-acid chain; its full sequence is DNA-directed RNA polymerase subunit beta' (1529 aa).

C156, C158, C183, and C186 together coordinate Zn(2+). Mg(2+) contacts are provided by D1328, D1330, and D1332.

The protein belongs to the RNA polymerase beta' chain family. RpoC1 subfamily. As to quaternary structure, in plastids the minimal PEP RNA polymerase catalytic core is composed of four subunits: alpha, beta, beta', and beta''. When a (nuclear-encoded) sigma factor is associated with the core the holoenzyme is formed, which can initiate transcription. The cofactor is Mg(2+). Zn(2+) is required as a cofactor.

The protein localises to the plastid. Its subcellular location is the chloroplast. The catalysed reaction is RNA(n) + a ribonucleoside 5'-triphosphate = RNA(n+1) + diphosphate. Functionally, DNA-dependent RNA polymerase catalyzes the transcription of DNA into RNA using the four ribonucleoside triphosphates as substrates. The sequence is that of DNA-directed RNA polymerase subunit beta' from Tetradesmus obliquus (Green alga).